Consider the following 207-residue polypeptide: Ribosomal RNA small subunit methyltransferase G (207 aa).

S-adenosyl-L-methionine contacts are provided by residues Gly-73, Leu-78, 124–125 (VE), and Arg-139.

It belongs to the methyltransferase superfamily. RNA methyltransferase RsmG family.

The protein resides in the cytoplasm. It carries out the reaction guanosine(527) in 16S rRNA + S-adenosyl-L-methionine = N(7)-methylguanosine(527) in 16S rRNA + S-adenosyl-L-homocysteine. Specifically methylates the N7 position of guanine in position 527 of 16S rRNA. The sequence is that of Ribosomal RNA small subunit methyltransferase G from Enterobacter sp. (strain 638).